Here is a 340-residue protein sequence, read N- to C-terminus: Uroporphyrinogen decarboxylase (340 aa).

Residues R23–R27, D72, Y147, T202, and H316 contribute to the substrate site.

The protein belongs to the uroporphyrinogen decarboxylase family. Homodimer.

The protein localises to the cytoplasm. It carries out the reaction uroporphyrinogen III + 4 H(+) = coproporphyrinogen III + 4 CO2. It participates in porphyrin-containing compound metabolism; protoporphyrin-IX biosynthesis; coproporphyrinogen-III from 5-aminolevulinate: step 4/4. Catalyzes the decarboxylation of four acetate groups of uroporphyrinogen-III to yield coproporphyrinogen-III. This Geobacter sulfurreducens (strain ATCC 51573 / DSM 12127 / PCA) protein is Uroporphyrinogen decarboxylase.